A 138-amino-acid polypeptide reads, in one-letter code: Proline-rich protein 34 (138 aa).

Residues 22-37 (SAPTSPPNPATRPAPG) show a composition bias toward pro residues. Disordered stretches follow at residues 22–55 (SAPT…PTRG) and 81–107 (APRL…SPAR).

The sequence is that of Proline-rich protein 34 (PRR34) from Homo sapiens (Human).